We begin with the raw amino-acid sequence, 103 residues long: MPAIEVGRVCVIIAGRRAGKKCVIVDLIDDKFVLVTGPKELNGVKRRRMNIKHLEPLDKKVEIEKGADDAKVLEAIRQAGLEEFMKEEVKPELPVPPSLGAYL.

This sequence belongs to the eukaryotic ribosomal protein eL14 family.

The chain is Large ribosomal subunit protein eL14 from Ignicoccus hospitalis (strain KIN4/I / DSM 18386 / JCM 14125).